Reading from the N-terminus, the 369-residue chain is Methylthioribose-1-phosphate isomerase (369 aa).

N-acetylmethionine is present on Met1. Residue Arg158 is modified to Omega-N-methylarginine. The active-site Proton donor is Asp248. Residue Ser366 is modified to Phosphoserine.

It belongs to the eIF-2B alpha/beta/delta subunits family. MtnA subfamily.

Its subcellular location is the cytoplasm. It is found in the nucleus. It carries out the reaction 5-(methylsulfanyl)-alpha-D-ribose 1-phosphate = 5-(methylsulfanyl)-D-ribulose 1-phosphate. Its pathway is amino-acid biosynthesis; L-methionine biosynthesis via salvage pathway; L-methionine from S-methyl-5-thio-alpha-D-ribose 1-phosphate: step 1/6. In terms of biological role, catalyzes the interconversion of methylthioribose-1-phosphate (MTR-1-P) into methylthioribulose-1-phosphate (MTRu-1-P). In Mus musculus (Mouse), this protein is Methylthioribose-1-phosphate isomerase (Mri1).